We begin with the raw amino-acid sequence, 300 residues long: 3-hydroxy-3-isohexenylglutaryl-CoA/hydroxy-methylglutaryl-CoA lyase (300 aa).

The 268-residue stretch at 7–274 (VRLVEVGPRD…HTGVDMHALV (268 aa)) folds into the Pyruvate carboxyltransferase domain. Residue arginine 15 coordinates substrate. A divalent metal cation contacts are provided by aspartate 16, histidine 207, and histidine 209. The active site involves cysteine 240. Asparagine 249 lines the a divalent metal cation pocket.

It belongs to the HMG-CoA lyase family. In terms of assembly, homodimer. Requires Mg(2+) as cofactor. The cofactor is Mn(2+).

It carries out the reaction 3-hydroxy-3-(4-methylpent-3-en-1-yl)glutaryl-CoA = 7-methyl-3-oxooct-6-enoyl-CoA + acetate. The enzyme catalyses (3S)-3-hydroxy-3-methylglutaryl-CoA = acetoacetate + acetyl-CoA. The protein operates within metabolic intermediate metabolism; (S)-3-hydroxy-3-methylglutaryl-CoA degradation; acetoacetate from (S)-3-hydroxy-3-methylglutaryl-CoA: step 1/1. Involved in the L-leucine, isovalerate and acyclic monoterpene catabolism. Catalyzes the cleavage of 3-hydroxy-3-methylglutaryl-CoA (HMG-CoA) to yield acetyl-CoA and acetoacetate. It can also catalyze the cleavage of 3-hydroxy-3-isohexenylglutaryl-CoA (HIHG_CoA) to yield 7-methyl-3-oxooct-6-enoyl-CoA and acetate. The protein is 3-hydroxy-3-isohexenylglutaryl-CoA/hydroxy-methylglutaryl-CoA lyase of Pseudomonas aeruginosa (strain ATCC 15692 / DSM 22644 / CIP 104116 / JCM 14847 / LMG 12228 / 1C / PRS 101 / PAO1).